A 446-amino-acid polypeptide reads, in one-letter code: Argininosuccinate synthase (446 aa).

ATP contacts are provided by residues 17–25 (AFSGGLDTS) and A43. Y99 lines the L-citrulline pocket. Residues G129 and T131 each contribute to the ATP site. L-aspartate contacts are provided by T131, N135, and D136. N135 is a binding site for L-citrulline. D136 lines the ATP pocket. L-citrulline-binding residues include R139 and S192. D194 provides a ligand contact to ATP. L-citrulline-binding residues include T201, E203, and E280.

The protein belongs to the argininosuccinate synthase family. Type 2 subfamily. In terms of assembly, homotetramer.

The protein localises to the cytoplasm. It catalyses the reaction L-citrulline + L-aspartate + ATP = 2-(N(omega)-L-arginino)succinate + AMP + diphosphate + H(+). It participates in amino-acid biosynthesis; L-arginine biosynthesis; L-arginine from L-ornithine and carbamoyl phosphate: step 2/3. The protein is Argininosuccinate synthase of Polaromonas sp. (strain JS666 / ATCC BAA-500).